The primary structure comprises 236 residues: Ribosome maturation protein SDO1 homolog (236 aa).

Belongs to the SDO1/SBDS family. In terms of assembly, crystallized in association with 70S ribosomes.

This Thermococcus kodakarensis (strain ATCC BAA-918 / JCM 12380 / KOD1) (Pyrococcus kodakaraensis (strain KOD1)) protein is Ribosome maturation protein SDO1 homolog.